We begin with the raw amino-acid sequence, 503 residues long: Putative acyl--CoA ligase YdaB (503 aa).

This sequence belongs to the ATP-dependent AMP-binding enzyme family.

The sequence is that of Putative acyl--CoA ligase YdaB (ydaB) from Bacillus subtilis (strain 168).